Consider the following 137-residue polypeptide: Small ribosomal subunit protein uS12 (137 aa).

Disordered regions lie at residues 1-21 (MPTINQLVRKPRKSKVEKSDS) and 34-57 (VHTKLAAPQKRGVATRVGTMTPKK).

It belongs to the universal ribosomal protein uS12 family. As to quaternary structure, part of the 30S ribosomal subunit. Contacts proteins S8 and S17. May interact with IF1 in the 30S initiation complex.

Its function is as follows. With S4 and S5 plays an important role in translational accuracy. Interacts with and stabilizes bases of the 16S rRNA that are involved in tRNA selection in the A site and with the mRNA backbone. Located at the interface of the 30S and 50S subunits, it traverses the body of the 30S subunit contacting proteins on the other side and probably holding the rRNA structure together. The combined cluster of proteins S8, S12 and S17 appears to hold together the shoulder and platform of the 30S subunit. The protein is Small ribosomal subunit protein uS12 of Streptococcus mutans serotype c (strain ATCC 700610 / UA159).